Reading from the N-terminus, the 278-residue chain is UPF0276 protein Swit_4400 (278 aa).

It belongs to the UPF0276 family.

The sequence is that of UPF0276 protein Swit_4400 from Rhizorhabdus wittichii (strain DSM 6014 / CCUG 31198 / JCM 15750 / NBRC 105917 / EY 4224 / RW1) (Sphingomonas wittichii).